Reading from the N-terminus, the 1045-residue chain is Elongation factor 3 (1045 aa).

HEAT repeat units lie at residues 5 to 42, 43 to 85, 86 to 123, 125 to 162, 166 to 203, 205 to 241, and 242 to 279; these read DQSL…GNII, EHDI…PSVE, PFVI…AINP, AIKA…AAKE, LRMP…TVDN, DIER…EVTP, and ATLS…LVED. Residues Ile-42, His-44, and Ser-83 each coordinate ADP. ADP contacts are provided by Thr-392, His-396, and Glu-397. ABC transporter domains are found at residues 426–641 and 667–993; these read DEGE…YYEL and VKVS…KKED. ADP contacts are provided by Asn-703, Glu-922, Asn-925, and His-951. Residues 974-1045 are disordered; sequence SGHNWVSGQG…AYVSSDDEDF (72 aa). Residues 1007–1031 show a composition bias toward basic residues; that stretch reads GGKKKKKLSSAELRKKKKERMKKKK.

It belongs to the ABC transporter superfamily. ABCF family. EF3 subfamily. Monomer.

It localises to the cytoplasm. It is found in the cytosol. The enzyme catalyses ATP + H2O = ADP + phosphate + H(+). It participates in protein biosynthesis; polypeptide chain elongation. In terms of biological role, ribosome-dependent ATPase that functions in cytoplasmic translation elongation. Required for the ATP-dependent release of deacylated tRNA from the ribosomal E-site during protein biosynthesis. Stimulates the eEF1A-dependent binding of aminoacyl-tRNA to the ribosomal A-site, which has reduced affinity for tRNA as long as the E-site is occupied. Assists translation termination by stimulating the release of nascent protein from the ribosome by release factors. This chain is Elongation factor 3 (TEF3), found in Candida glabrata (strain ATCC 2001 / BCRC 20586 / JCM 3761 / NBRC 0622 / NRRL Y-65 / CBS 138) (Yeast).